We begin with the raw amino-acid sequence, 340 residues long: Glyceraldehyde-3-phosphate dehydrogenase (340 aa).

Residues 11–12 (TI) and Gly-109 contribute to the NAD(+) site. Cys-123 and Cys-149 are joined by a disulfide. Position 138 to 140 (138 to 140 (SCN)) interacts with D-glyceraldehyde 3-phosphate. Catalysis depends on Cys-139, which acts as the Nucleophile. Arg-167 contributes to the NAD(+) binding site. 193-194 (HA) contacts D-glyceraldehyde 3-phosphate. An NAD(+)-binding site is contributed by Gln-300.

It belongs to the glyceraldehyde-3-phosphate dehydrogenase family. As to quaternary structure, homotetramer.

Its subcellular location is the cytoplasm. It catalyses the reaction D-glyceraldehyde 3-phosphate + phosphate + NADP(+) = (2R)-3-phospho-glyceroyl phosphate + NADPH + H(+). The enzyme catalyses D-glyceraldehyde 3-phosphate + phosphate + NAD(+) = (2R)-3-phospho-glyceroyl phosphate + NADH + H(+). Its pathway is carbohydrate degradation; glycolysis; pyruvate from D-glyceraldehyde 3-phosphate: step 1/5. Functionally, can use both NAD and NADP as cofactors, but exhibits a marked preference for NADP. The protein is Glyceraldehyde-3-phosphate dehydrogenase (gap) of Saccharolobus solfataricus (strain ATCC 35092 / DSM 1617 / JCM 11322 / P2) (Sulfolobus solfataricus).